We begin with the raw amino-acid sequence, 875 residues long: Metal transporter CNNM2 (875 aa).

Topologically, residues 1–250 (MIGCGACEPE…TKMIVGEEKK (250 aa)) are extracellular. N-linked (GlcNAc...) asparagine glycosylation is present at asparagine 112. Residues 121–149 (TEHERRRHTPSERGLGGPAPPEPDSGPQR) form a disordered region. Residues 251 to 271 (FLLPFWLQVIFISLLLCLSGM) form a helical membrane-spanning segment. Residues 251-431 (FLLPFWLQVI…DPYNDLVKEE (181 aa)) form the CNNM transmembrane domain. Over 272–313 (FSGLNLGLMALDPMELRIVQNCGTEKEKNYAKRIEPVRRQGN) the chain is Cytoplasmic. The helical intramembrane region spans 314–334 (YLLCSLLLGNVLVNTTLTILL). At 335–338 (DDIA) the chain is on the cytoplasmic side. The chain crosses the membrane as a helical span at residues 339 to 359 (GSGLVAVVVSTIGIVIFGEIV). The Extracellular segment spans residues 360-368 (PQAICSRHG). The helical transmembrane segment at 369-389 (LAVGANTIFLTKFFMMMTFPA) threads the bilayer. Topologically, residues 390-875 (SYPVSKLLDC…NHSLHSEGAI (486 aa)) are cytoplasmic. 2 consecutive CBS domains span residues 450-511 (MTPL…CTPL) and 518-584 (YNHP…ILDE). A disordered region spans residues 741–763 (AGSPGENKSPPRPCGLNHSDSLS). A Phosphoserine modification is found at serine 761.

Belongs to the ACDP family. Isoform 1 and isoform 2 may interact with each other. Post-translationally, the N-terminus is cleaved within the endoplasmic reticulum. The signal peptidase complex seems to be involved in the processing, but the exact cleavage site has not been identified. Widely expressed, with highest levels in kidney, lung, spleen and testis. In the kidney, predominantly expressed in the distal convoluted tubule and, at lower levels, in the connecting tubule (at protein level).

The protein resides in the cell membrane. In terms of biological role, divalent metal cation transporter. Mediates transport of divalent metal cations in an order of Mg(2+) &gt; Co(2+) &gt; Mn(2+) &gt; Sr(2+) &gt; Ba(2+) &gt; Cu(2+) &gt; Fe(2+). In Mus musculus (Mouse), this protein is Metal transporter CNNM2 (Cnnm2).